A 294-amino-acid chain; its full sequence is 33 kDa chaperonin (294 aa).

Cystine bridges form between Cys-239-Cys-241 and Cys-272-Cys-275.

Belongs to the HSP33 family. Post-translationally, under oxidizing conditions two disulfide bonds are formed involving the reactive cysteines. Under reducing conditions zinc is bound to the reactive cysteines and the protein is inactive.

The protein resides in the cytoplasm. Functionally, redox regulated molecular chaperone. Protects both thermally unfolding and oxidatively damaged proteins from irreversible aggregation. Plays an important role in the bacterial defense system toward oxidative stress. This chain is 33 kDa chaperonin, found in Listeria welshimeri serovar 6b (strain ATCC 35897 / DSM 20650 / CCUG 15529 / CIP 8149 / NCTC 11857 / SLCC 5334 / V8).